The chain runs to 495 residues: tRNA (guanine-N(7)-)-methyltransferase non-catalytic subunit trm82 (495 aa).

The disordered stretch occupies residues 51–100; the sequence is ANTAEAKAAPSTTGEEPPEKRRKVSPPPDQKPEDSEPASQKSRKPEASPA. 3 WD repeats span residues 99 to 139, 245 to 290, and 295 to 337; these read PAWS…ALKQ, SMLT…HIIE, and GHTS…QKVP.

It belongs to the WD repeat TRM82 family. In terms of assembly, forms a heterodimer with the catalytic subunit trm8.

The protein localises to the nucleus. The protein operates within tRNA modification; N(7)-methylguanine-tRNA biosynthesis. Required for the formation of N(7)-methylguanine at position 46 (m7G46) in tRNA. In the complex, it is required to stabilize and induce conformational changes of the catalytic subunit. This is tRNA (guanine-N(7)-)-methyltransferase non-catalytic subunit trm82 (trm82) from Aspergillus clavatus (strain ATCC 1007 / CBS 513.65 / DSM 816 / NCTC 3887 / NRRL 1 / QM 1276 / 107).